The primary structure comprises 614 residues: Dihydroxy-acid dehydratase 1 (614 aa).

D81 is a binding site for Mg(2+). [2Fe-2S] cluster is bound at residue C122. Residues D123 and K124 each coordinate Mg(2+). At K124 the chain carries N6-carboxylysine. Residue C195 coordinates [2Fe-2S] cluster. Mg(2+) is bound at residue E491. The Proton acceptor role is filled by S517.

This sequence belongs to the IlvD/Edd family. As to quaternary structure, homodimer. The cofactor is [2Fe-2S] cluster. Requires Mg(2+) as cofactor.

It catalyses the reaction (2R)-2,3-dihydroxy-3-methylbutanoate = 3-methyl-2-oxobutanoate + H2O. The enzyme catalyses (2R,3R)-2,3-dihydroxy-3-methylpentanoate = (S)-3-methyl-2-oxopentanoate + H2O. It functions in the pathway amino-acid biosynthesis; L-isoleucine biosynthesis; L-isoleucine from 2-oxobutanoate: step 3/4. The protein operates within amino-acid biosynthesis; L-valine biosynthesis; L-valine from pyruvate: step 3/4. Functions in the biosynthesis of branched-chain amino acids. Catalyzes the dehydration of (2R,3R)-2,3-dihydroxy-3-methylpentanoate (2,3-dihydroxy-3-methylvalerate) into 2-oxo-3-methylpentanoate (2-oxo-3-methylvalerate) and of (2R)-2,3-dihydroxy-3-methylbutanoate (2,3-dihydroxyisovalerate) into 2-oxo-3-methylbutanoate (2-oxoisovalerate), the penultimate precursor to L-isoleucine and L-valine, respectively. The sequence is that of Dihydroxy-acid dehydratase 1 from Mesorhizobium japonicum (strain LMG 29417 / CECT 9101 / MAFF 303099) (Mesorhizobium loti (strain MAFF 303099)).